A 354-amino-acid chain; its full sequence is Nicotinate-nucleotide--dimethylbenzimidazole phosphoribosyltransferase (354 aa).

Glutamate 322 acts as the Proton acceptor in catalysis.

It belongs to the CobT family.

The catalysed reaction is 5,6-dimethylbenzimidazole + nicotinate beta-D-ribonucleotide = alpha-ribazole 5'-phosphate + nicotinate + H(+). The protein operates within nucleoside biosynthesis; alpha-ribazole biosynthesis; alpha-ribazole from 5,6-dimethylbenzimidazole: step 1/2. Functionally, catalyzes the synthesis of alpha-ribazole-5'-phosphate from nicotinate mononucleotide (NAMN) and 5,6-dimethylbenzimidazole (DMB). The polypeptide is Nicotinate-nucleotide--dimethylbenzimidazole phosphoribosyltransferase (Solidesulfovibrio magneticus (strain ATCC 700980 / DSM 13731 / RS-1) (Desulfovibrio magneticus)).